The primary structure comprises 550 residues: Methionine--tRNA ligase (550 aa).

Positions 12–22 (PYANGPLHFGH) match the 'HIGH' region motif. Zn(2+) contacts are provided by C144, C147, C157, and C160. A 'KMSKS' region motif is present at residues 330-334 (QFSKS). Residue K333 coordinates ATP.

The protein belongs to the class-I aminoacyl-tRNA synthetase family. MetG type 1 subfamily. As to quaternary structure, monomer. Zn(2+) is required as a cofactor.

The protein localises to the cytoplasm. It carries out the reaction tRNA(Met) + L-methionine + ATP = L-methionyl-tRNA(Met) + AMP + diphosphate. Its function is as follows. Is required not only for elongation of protein synthesis but also for the initiation of all mRNA translation through initiator tRNA(fMet) aminoacylation. In Chlamydia caviae (strain ATCC VR-813 / DSM 19441 / 03DC25 / GPIC) (Chlamydophila caviae), this protein is Methionine--tRNA ligase.